Consider the following 308-residue polypeptide: GMP synthase [glutamine-hydrolyzing] subunit B (308 aa).

Positions 2-183 (LNPSDFIEEA…LGLPREMIQR (182 aa)) constitute a GMPS ATP-PPase domain. 29–35 (SGGVDSS) lines the ATP pocket.

Heterodimer composed of a glutamine amidotransferase subunit (A) and a GMP-binding subunit (B).

The enzyme catalyses XMP + L-glutamine + ATP + H2O = GMP + L-glutamate + AMP + diphosphate + 2 H(+). It participates in purine metabolism; GMP biosynthesis; GMP from XMP (L-Gln route): step 1/1. Functionally, catalyzes the synthesis of GMP from XMP. This chain is GMP synthase [glutamine-hydrolyzing] subunit B (guaAB), found in Methanothermobacter thermautotrophicus (strain ATCC 29096 / DSM 1053 / JCM 10044 / NBRC 100330 / Delta H) (Methanobacterium thermoautotrophicum).